Reading from the N-terminus, the 624-residue chain is Chaperone protein DnaK (624 aa).

Residue T174 is modified to Phosphothreonine; by autocatalysis. 2 disordered regions span residues 544 to 563 and 576 to 624; these read KKAQ…DDLS and NAQK…DDKK. Positions 581–600 are enriched in low complexity; sequence QQAQGGPASGAATDAGAAQG. Basic and acidic residues predominate over residues 601 to 624; that stretch reads SDDKKSDDDTINGDYKDVSDDDKK.

The protein belongs to the heat shock protein 70 family.

Functionally, acts as a chaperone. In Lacticaseibacillus casei (strain BL23) (Lactobacillus casei), this protein is Chaperone protein DnaK.